Consider the following 360-residue polypeptide: Isocitrate dehydrogenase [NAD] subunit 1, mitochondrial (360 aa).

A mitochondrion-targeting transit peptide spans 1 to 11; that stretch reads MLNRTIAKRTL. Substrate is bound by residues arginine 109, arginine 140, and aspartate 228. Position 228 (aspartate 228) interacts with Mg(2+).

It belongs to the isocitrate and isopropylmalate dehydrogenases family. In terms of assembly, octamer of two non-identical subunits IDH1 and IDH2. It depends on Mg(2+) as a cofactor. Requires Mn(2+) as cofactor.

It localises to the mitochondrion. It carries out the reaction D-threo-isocitrate + NAD(+) = 2-oxoglutarate + CO2 + NADH. Its activity is regulated as follows. Allosterically regulated by several compounds including AMP, NAD(+), and citrate. In terms of biological role, performs an essential role in the oxidative function of the citric acid cycle. Also binds RNA; specifically to the 5'-untranslated leaders of mitochondrial mRNAs. The polypeptide is Isocitrate dehydrogenase [NAD] subunit 1, mitochondrial (IDH1) (Saccharomyces cerevisiae (strain ATCC 204508 / S288c) (Baker's yeast)).